The primary structure comprises 478 residues: tRNA modification GTPase MnmE (478 aa).

The (6S)-5-formyl-5,6,7,8-tetrahydrofolate site is built by R36, E94, and K133. Positions 230–402 constitute a TrmE-type G domain; the sequence is GIHVVLAGRP…LVETLCAKVG (173 aa). N240 lines the K(+) pocket. Residues 240–245, 259–265, and 284–287 each bind GTP; these read NAGKSS, TDVAGTT, and DTAG. Residue S244 participates in Mg(2+) binding. Residues T259, V261, and T264 each coordinate K(+). Residue T265 coordinates Mg(2+). Position 478 (K478) interacts with (6S)-5-formyl-5,6,7,8-tetrahydrofolate.

Belongs to the TRAFAC class TrmE-Era-EngA-EngB-Septin-like GTPase superfamily. TrmE GTPase family. As to quaternary structure, homodimer. Heterotetramer of two MnmE and two MnmG subunits. The cofactor is K(+).

The protein resides in the cytoplasm. Exhibits a very high intrinsic GTPase hydrolysis rate. Involved in the addition of a carboxymethylaminomethyl (cmnm) group at the wobble position (U34) of certain tRNAs, forming tRNA-cmnm(5)s(2)U34. The chain is tRNA modification GTPase MnmE from Psychrobacter cryohalolentis (strain ATCC BAA-1226 / DSM 17306 / VKM B-2378 / K5).